The sequence spans 60 residues: Large ribosomal subunit protein uL30 (60 aa).

The protein belongs to the universal ribosomal protein uL30 family. As to quaternary structure, part of the 50S ribosomal subunit.

This chain is Large ribosomal subunit protein uL30, found in Shewanella loihica (strain ATCC BAA-1088 / PV-4).